The chain runs to 556 residues: Formate--tetrahydrofolate ligase (556 aa).

Residue 65-72 (TPAGEGKT) coordinates ATP.

The protein belongs to the formate--tetrahydrofolate ligase family.

The enzyme catalyses (6S)-5,6,7,8-tetrahydrofolate + formate + ATP = (6R)-10-formyltetrahydrofolate + ADP + phosphate. It functions in the pathway one-carbon metabolism; tetrahydrofolate interconversion. This chain is Formate--tetrahydrofolate ligase, found in Heliobacterium modesticaldum (strain ATCC 51547 / Ice1).